Consider the following 458-residue polypeptide: Cysteine protease ATG4C (458 aa).

The residue at position 1 (methionine 1) is an N-acetylmethionine. The active-site Nucleophile is the cysteine 111. Active-site residues include aspartate 345 and histidine 347. A Phosphoserine modification is found at serine 451. Threonine 452 bears the Phosphothreonine mark.

This sequence belongs to the peptidase C54 family.

The protein resides in the cytoplasm. It carries out the reaction [protein]-C-terminal L-amino acid-glycyl-phosphatidylethanolamide + H2O = [protein]-C-terminal L-amino acid-glycine + a 1,2-diacyl-sn-glycero-3-phosphoethanolamine. Inhibited by N-ethylmaleimide. Cysteine protease that plays a key role in autophagy by mediating both proteolytic activation and delipidation of ATG8 family proteins. The protease activity is required for proteolytic activation of ATG8 family proteins: cleaves the C-terminal amino acid of ATG8 proteins MAP1LC3 and GABARAPL2, to reveal a C-terminal glycine. Exposure of the glycine at the C-terminus is essential for ATG8 proteins conjugation to phosphatidylethanolamine (PE) and insertion to membranes, which is necessary for autophagy. In addition to the protease activity, also mediates delipidation of ATG8 family proteins. Catalyzes delipidation of PE-conjugated forms of ATG8 proteins during macroautophagy. Compared to ATG4B, the major protein for proteolytic activation of ATG8 proteins, shows weaker ability to cleave the C-terminal amino acid of ATG8 proteins, while it displays stronger delipidation activity. In contrast to other members of the family, weakly or not involved in phagophore growth during mitophagy. This is Cysteine protease ATG4C from Mus musculus (Mouse).